The primary structure comprises 247 residues: Protein lin-28 homolog B (247 aa).

Residues 1–22 (MAEGGASKGEEPEKLPGLAEDE) form a disordered region. The CSD domain occupies 27–100 (HGTGHCKWFN…GLESIRVTGP (74 aa)). 3 positions are modified to phosphoserine: Ser-94, Ser-103, and Ser-108. Residues 96–124 (RVTGPGGSPCLGSERRPKGKTLQKRKPKG) are disordered. Positions 112–123 (PKGKTLQKRKPK) are enriched in basic residues. 2 CCHC-type zinc fingers span residues 125–142 (DRCY…ECSL) and 147–164 (KKCH…NCPH). 8 residues coordinate Zn(2+): Cys-127, Cys-130, His-135, Cys-140, Cys-149, Cys-152, His-157, and Cys-162. The span at 173–186 (SSQGRQEAESQPCS) shows a compositional bias: polar residues. The segment at 173–247 (SSQGRQEAES…GPLIQKRKKT (75 aa)) is disordered. Positions 207-219 (VKSEMAEHSDRSP) are enriched in basic and acidic residues.

It belongs to the lin-28 family.

The protein localises to the nucleus. It is found in the nucleolus. Its function is as follows. Suppressor of microRNA (miRNA) biogenesis, including that of let-7 and possibly of miR107, miR-143 and miR-200c. Binds primary let-7 transcripts (pri-let-7), including pri-let-7g and pri-let-7a-1, and sequester them in the nucleolus, away from the microprocessor complex, hence preventing their processing into mature miRNA. Does not act on pri-miR21. The repression of let-7 expression is required for normal development and contributes to maintain the pluripotent state of embryonic stem cells by preventing let-7-mediated differentiation. When overexpressed, recruits ZCCHC11/TUT4 uridylyltransferase to pre-let-7 transcripts, leading to their terminal uridylation and degradation. This activity might not be relevant in vivo, as LIN28B-mediated inhibition of let-7 miRNA maturation appears to be ZCCHC11-independent. Interaction with target pre-miRNAs occurs via an 5'-GGAG-3' motif in the pre-miRNA terminal loop. Mediates MYC-induced let-7 repression. When overexpressed, may stimulate growth of carcinoma cell lines. In Mus musculus (Mouse), this protein is Protein lin-28 homolog B (Lin28b).